Reading from the N-terminus, the 40-residue chain is uncharacterized protein (40 aa).

This is an uncharacterized protein from Escherichia coli (Bacteriophage T4).